A 190-amino-acid chain; its full sequence is CDP-diacylglycerol--glycerol-3-phosphate 3-phosphatidyltransferase (190 aa).

The Cytoplasmic portion of the chain corresponds to 6–17; the sequence is GVFNIPMYLTLF. The chain crosses the membrane as a helical span at residues 18-42; that stretch reads RIIMVPCFVAVFYWPIYWSPMLCTL. The Periplasmic segment spans residues 43–65; that stretch reads IFFIAAITDWFDGFLARRWNQTS. Residues 66–86 traverse the membrane as a helical segment; it reads RIGGFLDPIADKIMIITALIL. The Cytoplasmic portion of the chain corresponds to 87–91; that stretch reads ISEHF. The chain crosses the membrane as a helical span at residues 92–112; sequence HVWWMTLPISSIIIREILISS. At 113 to 150 the chain is on the periplasmic side; sequence LRECIARVDNKNNISVIWLSKVKTFAQMLALIALLCRL. The chain crosses the membrane as a helical span at residues 151 to 173; sequence NEWTVIMGVISLYTAMLLTLWSM. At 174 to 186 the chain is on the cytoplasmic side; it reads CYYVYSVSSILLQ.

This sequence belongs to the CDP-alcohol phosphatidyltransferase class-I family.

It is found in the cell inner membrane. The enzyme catalyses a CDP-1,2-diacyl-sn-glycerol + sn-glycerol 3-phosphate = a 1,2-diacyl-sn-glycero-3-phospho-(1'-sn-glycero-3'-phosphate) + CMP + H(+). It functions in the pathway phospholipid metabolism; phosphatidylglycerol biosynthesis; phosphatidylglycerol from CDP-diacylglycerol: step 1/2. Catalyzes the conversion of cytidine diphosphate diacylglycerol (CDP-DG) and glycerol 3-phosphate into phosphatidylglycerol. Essential for the synthesis of anionic phospholipids, thereby playing a role in balancing the ratio of zwitterionic and anionic phospholipids, which is thought to be important for normal membrane function. This is CDP-diacylglycerol--glycerol-3-phosphate 3-phosphatidyltransferase from Blochmanniella floridana.